Here is a 229-residue protein sequence, read N- to C-terminus: Histone H1 (229 aa).

Disordered regions lie at residues 1–52 (MADT…SSHP) and 125–229 (APAL…RTRK). Positions 32–45 (KEKKKVIAAKKPKS) are enriched in basic residues. Positions 50–119 (SHPSFFEMIS…KVKNSFKLPS (70 aa)) constitute an H15 domain. Over residues 125 to 138 (APALAKKPTIPKPK) the composition is skewed to low complexity. Residues 139-160 (VAAKPKTAKIGAKPKAKAKVAA) are compositionally biased toward basic residues. Composition is skewed to low complexity over residues 161 to 177 (KTKA…PAAK) and 185 to 205 (KPKT…VASP). A compositionally biased stretch (basic residues) spans 206–229 (GKKKAVPVKKVKTVKSPAGKRTRK).

It belongs to the histone H1/H5 family.

It is found in the nucleus. The protein resides in the chromosome. Functionally, histones H1 are necessary for the condensation of nucleosome chains into higher-order structures. In Euphorbia esula (Leafy spurge), this protein is Histone H1.